We begin with the raw amino-acid sequence, 342 residues long: tRNA N6-adenosine threonylcarbamoyltransferase (342 aa).

Residues His-120 and His-124 each contribute to the Fe cation site. Substrate-binding positions include Val-142–Gly-146, Asp-175, Gly-188, Asp-192, and Asn-281. A Fe cation-binding site is contributed by Asp-310.

It belongs to the KAE1 / TsaD family. It depends on Fe(2+) as a cofactor.

It localises to the cytoplasm. The catalysed reaction is L-threonylcarbamoyladenylate + adenosine(37) in tRNA = N(6)-L-threonylcarbamoyladenosine(37) in tRNA + AMP + H(+). Its function is as follows. Required for the formation of a threonylcarbamoyl group on adenosine at position 37 (t(6)A37) in tRNAs that read codons beginning with adenine. Is involved in the transfer of the threonylcarbamoyl moiety of threonylcarbamoyl-AMP (TC-AMP) to the N6 group of A37, together with TsaE and TsaB. TsaD likely plays a direct catalytic role in this reaction. This Geobacillus kaustophilus (strain HTA426) protein is tRNA N6-adenosine threonylcarbamoyltransferase.